Reading from the N-terminus, the 346-residue chain is Aspartate-semialdehyde dehydrogenase (346 aa).

Residues 12 to 15 (SGAV) and 40 to 41 (RS) each bind NADP(+). Arg-101 is a binding site for phosphate. Catalysis depends on Cys-131, which acts as the Acyl-thioester intermediate. Gln-158 contributes to the substrate binding site. 161 to 162 (SG) lines the NADP(+) pocket. Lys-225 provides a ligand contact to phosphate. A substrate-binding site is contributed by Arg-246. His-253 acts as the Proton acceptor in catalysis. Gln-326 serves as a coordination point for NADP(+).

Belongs to the aspartate-semialdehyde dehydrogenase family. As to quaternary structure, homodimer.

It catalyses the reaction L-aspartate 4-semialdehyde + phosphate + NADP(+) = 4-phospho-L-aspartate + NADPH + H(+). It functions in the pathway amino-acid biosynthesis; L-lysine biosynthesis via DAP pathway; (S)-tetrahydrodipicolinate from L-aspartate: step 2/4. It participates in amino-acid biosynthesis; L-methionine biosynthesis via de novo pathway; L-homoserine from L-aspartate: step 2/3. Its pathway is amino-acid biosynthesis; L-threonine biosynthesis; L-threonine from L-aspartate: step 2/5. Its function is as follows. Catalyzes the NADPH-dependent formation of L-aspartate-semialdehyde (L-ASA) by the reductive dephosphorylation of L-aspartyl-4-phosphate. The protein is Aspartate-semialdehyde dehydrogenase of Helicobacter pylori (strain J99 / ATCC 700824) (Campylobacter pylori J99).